The chain runs to 49 residues: Large ribosomal subunit protein eL40 (49 aa).

The protein belongs to the eukaryotic ribosomal protein eL40 family.

This Methanosarcina acetivorans (strain ATCC 35395 / DSM 2834 / JCM 12185 / C2A) protein is Large ribosomal subunit protein eL40.